A 161-amino-acid chain; its full sequence is Phosphopantetheine adenylyltransferase (161 aa).

Position 10 (T10) interacts with substrate. ATP contacts are provided by residues 10–11 and H18; that span reads TF. The substrate site is built by K42, M74, and R88. ATP is bound by residues 89-91, E99, and 124-130; these read GLR and WSFISSS.

This sequence belongs to the bacterial CoaD family. As to quaternary structure, homohexamer. It depends on Mg(2+) as a cofactor.

The protein localises to the cytoplasm. It carries out the reaction (R)-4'-phosphopantetheine + ATP + H(+) = 3'-dephospho-CoA + diphosphate. It functions in the pathway cofactor biosynthesis; coenzyme A biosynthesis; CoA from (R)-pantothenate: step 4/5. Its function is as follows. Reversibly transfers an adenylyl group from ATP to 4'-phosphopantetheine, yielding dephospho-CoA (dPCoA) and pyrophosphate. In Edwardsiella ictaluri (strain 93-146), this protein is Phosphopantetheine adenylyltransferase.